A 258-amino-acid chain; its full sequence is Imidazole glycerol phosphate synthase subunit HisF (258 aa).

Residues D11 and D130 contribute to the active site.

This sequence belongs to the HisA/HisF family. As to quaternary structure, heterodimer of HisH and HisF.

It localises to the cytoplasm. The enzyme catalyses 5-[(5-phospho-1-deoxy-D-ribulos-1-ylimino)methylamino]-1-(5-phospho-beta-D-ribosyl)imidazole-4-carboxamide + L-glutamine = D-erythro-1-(imidazol-4-yl)glycerol 3-phosphate + 5-amino-1-(5-phospho-beta-D-ribosyl)imidazole-4-carboxamide + L-glutamate + H(+). The protein operates within amino-acid biosynthesis; L-histidine biosynthesis; L-histidine from 5-phospho-alpha-D-ribose 1-diphosphate: step 5/9. In terms of biological role, IGPS catalyzes the conversion of PRFAR and glutamine to IGP, AICAR and glutamate. The HisF subunit catalyzes the cyclization activity that produces IGP and AICAR from PRFAR using the ammonia provided by the HisH subunit. This chain is Imidazole glycerol phosphate synthase subunit HisF, found in Escherichia coli O6:K15:H31 (strain 536 / UPEC).